A 93-amino-acid chain; its full sequence is Co-chaperonin GroES (93 aa).

The protein belongs to the GroES chaperonin family. As to quaternary structure, heptamer of 7 subunits arranged in a ring. Interacts with the chaperonin GroEL.

It is found in the cytoplasm. In terms of biological role, together with the chaperonin GroEL, plays an essential role in assisting protein folding. The GroEL-GroES system forms a nano-cage that allows encapsulation of the non-native substrate proteins and provides a physical environment optimized to promote and accelerate protein folding. GroES binds to the apical surface of the GroEL ring, thereby capping the opening of the GroEL channel. This Streptococcus gordonii (strain Challis / ATCC 35105 / BCRC 15272 / CH1 / DL1 / V288) protein is Co-chaperonin GroES.